A 990-amino-acid chain; its full sequence is Chondroitin sulfate ABC exolyase (990 aa).

The Proton acceptor role is filled by histidine 453. Tyrosine 460 serves as the catalytic Proton donor.

This sequence belongs to the polysaccharide lyase 8 family.

The enzyme catalyses Exolytic removal of Delta(4)-unsaturated disaccharide residues from the non-reducing ends of both polymeric chondroitin/dermatan sulfates and their oligosaccharide fragments.. Its activity is regulated as follows. Inhibited by Zn(2+), whereas Ni(2+), Fe(2+), and Cu(2+) have little or no effect on activity. Its function is as follows. Broad-specificity glycosaminoglycan lyase, which acts in an exolytic fashion, and preferentially degrades the tetra- and hexasaccharide derivatives of chondroitin sulfate and dermatan sulfate produced by the chondroitin sulfate ABC endolyase, to yield the respective disaccharides. To a lesser extent, is also able to split off disaccharide residues directly from polymeric chondroitin 4- and 6-sulfate, dermatan sulfate, chondroitin, and hyaluronan. Is not active against keratan sulfate, heparan sulfate, and heparin. The chain is Chondroitin sulfate ABC exolyase (ChABCII) from Proteus vulgaris.